The primary structure comprises 426 residues: Probable inactive metalloprotease YmfF (426 aa).

His50 and Glu138 together coordinate Zn(2+).

Belongs to the peptidase M16 family.

This is Probable inactive metalloprotease YmfF (ymfF) from Bacillus subtilis (strain 168).